The primary structure comprises 608 residues: Dolichyl-diphosphooligosaccharide--protein glycosyltransferase subunit 1 (608 aa).

The N-terminal stretch at 1–24 (MEAPAVCLLPLLLLLWAWAPAPGR) is a signal peptide. Residues 25–435 (ASPEALPLVN…VVHYTFNKVL (411 aa)) are Lumenal-facing. Lys-188 is modified (N6-acetyllysine). N-linked (GlcNAc...) asparagine glycosylation is present at Asn-300. A helical membrane pass occupies residues 436 to 456 (MLQEPLLVVAAFYILFFTVIV). Residues 457 to 607 (YVRLDFSITK…VTKIDHILDA (151 aa)) are Cytoplasmic-facing. Lys-539 is modified (N6-acetyllysine; alternate). Lys-539 participates in a covalent cross-link: Glycyl lysine isopeptide (Lys-Gly) (interchain with G-Cter in SUMO2); alternate.

This sequence belongs to the OST1 family. In terms of assembly, component of the oligosaccharyltransferase (OST) complex. OST exists in two different complex forms which contain common core subunits RPN1, RPN2, OST48, OST4, DAD1 and TMEM258, either STT3A or STT3B as catalytic subunits, and form-specific accessory subunits. STT3A complex assembly occurs through the formation of 3 subcomplexes. Subcomplex 1 contains RPN1 and TMEM258, subcomplex 2 contains the STT3A-specific subunits STT3A, DC2/OSTC, and KCP2 as well as the core subunit OST4, and subcomplex 3 contains RPN2, DAD1, and OST48. The STT3A complex can form stable complexes with the Sec61 complex or with both the Sec61 and TRAP complexes. Interacts with TMEM35A/NACHO. Post-translationally, ubiquitinated by the ECS(ASB11) complex. Ufmylated by UFL1 in response to endoplasmic reticulum stress, promoting reticulophagy of endoplasmic reticulum sheets. In terms of tissue distribution, detected in liver (at protein level).

The protein localises to the endoplasmic reticulum membrane. It functions in the pathway protein modification; protein glycosylation. Its function is as follows. Subunit of the oligosaccharyl transferase (OST) complex that catalyzes the initial transfer of a defined glycan (Glc(3)Man(9)GlcNAc(2) in eukaryotes) from the lipid carrier dolichol-pyrophosphate to an asparagine residue within an Asn-X-Ser/Thr consensus motif in nascent polypeptide chains, the first step in protein N-glycosylation. N-glycosylation occurs cotranslationally and the complex associates with the Sec61 complex at the channel-forming translocon complex that mediates protein translocation across the endoplasmic reticulum (ER). All subunits are required for a maximal enzyme activity. This chain is Dolichyl-diphosphooligosaccharide--protein glycosyltransferase subunit 1, found in Sus scrofa (Pig).